A 1042-amino-acid polypeptide reads, in one-letter code: Ubiquitin carboxyl-terminal hydrolase 38 (1042 aa).

Residues 445 to 949 form the USP domain; the sequence is TGLINLGNTC…TAYVLLYKKQ (505 aa). The active-site Nucleophile is C454. H857 serves as the catalytic Proton acceptor.

It belongs to the peptidase C19 family. Interacts with isoform 1 of FBXW7; this interaction prevents FBXW7-mediated degradation of MYC. Highly expressed in skeletal muscle. Expressed in adrenal gland.

It localises to the cytoplasm. The protein resides in the nucleus. It catalyses the reaction Thiol-dependent hydrolysis of ester, thioester, amide, peptide and isopeptide bonds formed by the C-terminal Gly of ubiquitin (a 76-residue protein attached to proteins as an intracellular targeting signal).. Functionally, deubiquitinating enzyme that plays a role in various cellular processes, including DNA repair, cell cycle regulation, and immune response. Plays a role in the inhibition of type I interferon signaling by mediating the 'Lys-33' to 'Lys-48' ubiquitination transition of TBK1 leading to its degradation. Cleaves the ubiquitin chain from the histone demethylase LSD1/KDM1A and prevents it from degradation by the 26S proteasome, thus maintaining LSD1 protein level in cells. Plays a role in the DNA damage response by regulating the deacetylase activity of HDAC1. Mechanistically, removes the 'Lys-63'-linked ubiquitin chain promoting the deacetylase activity of HDAC1 in response to DNA damage. Also acts as a specific deubiquitinase of histone deacetylase 3/HDAC3 and cleaves its 'Lys-63'-linked ubiquitin chains to lower its histone deacetylase activity. Regulates MYC levels and cell proliferation via antagonizing ubiquitin E3 ligase FBXW7 thereby preventing MYC 'Lys-48'-linked ubiquitination and degradation. Participates in antiviral response by removing both 'Lys-48'-linked and 'Lys-63'-linked polyubiquitination of Zika virus envelope protein E. Constitutively associated with IL-33R/IL1RL1, deconjugates its 'Lys-27'-linked polyubiquitination resulting in its autophagic degradation. In Homo sapiens (Human), this protein is Ubiquitin carboxyl-terminal hydrolase 38 (USP38).